The chain runs to 163 residues: Phosphopantetheine adenylyltransferase (163 aa).

S8 is a binding site for substrate. Residues 8-9 and H16 contribute to the ATP site; that span reads SF. Substrate contacts are provided by K40, T72, and R86. Residues 87–89, E97, and 122–128 each bind ATP; these read GLR and HSFLSSS.

It belongs to the bacterial CoaD family. In terms of assembly, homohexamer. The cofactor is Mg(2+).

The protein localises to the cytoplasm. It carries out the reaction (R)-4'-phosphopantetheine + ATP + H(+) = 3'-dephospho-CoA + diphosphate. It functions in the pathway cofactor biosynthesis; coenzyme A biosynthesis; CoA from (R)-pantothenate: step 4/5. Functionally, reversibly transfers an adenylyl group from ATP to 4'-phosphopantetheine, yielding dephospho-CoA (dPCoA) and pyrophosphate. This Synechococcus sp. (strain CC9902) protein is Phosphopantetheine adenylyltransferase.